Here is a 95-residue protein sequence, read N- to C-terminus: Translation initiation factor IF-1 (95 aa).

In terms of domain architecture, S1-like spans 1-72; the sequence is MAKEELIEMD…TKARITYRHK (72 aa). The segment at 70 to 95 is disordered; sequence RHKVGGPPGPVTGGGNRPPPRQPRRR. The segment covering 86–95 has biased composition (pro residues); sequence RPPPRQPRRR.

It belongs to the IF-1 family. In terms of assembly, component of the 30S ribosomal translation pre-initiation complex which assembles on the 30S ribosome in the order IF-2 and IF-3, IF-1 and N-formylmethionyl-tRNA(fMet); mRNA recruitment can occur at any time during PIC assembly.

Its subcellular location is the cytoplasm. Its function is as follows. One of the essential components for the initiation of protein synthesis. Stabilizes the binding of IF-2 and IF-3 on the 30S subunit to which N-formylmethionyl-tRNA(fMet) subsequently binds. Helps modulate mRNA selection, yielding the 30S pre-initiation complex (PIC). Upon addition of the 50S ribosomal subunit IF-1, IF-2 and IF-3 are released leaving the mature 70S translation initiation complex. The protein is Translation initiation factor IF-1 of Rhodospirillum rubrum (strain ATCC 11170 / ATH 1.1.1 / DSM 467 / LMG 4362 / NCIMB 8255 / S1).